Reading from the N-terminus, the 56-residue chain is Prokaryotic ubiquitin-like protein UBact (56 aa).

The interval 1 to 56 (MPERIVKPMPQDPVTKPGDEGPRTPNVPKPDTERLLERMRRVDPRQAQRYRQRSGE) is disordered. Residues 30-46 (PDTERLLERMRRVDPRQ) show a composition bias toward basic and acidic residues. An Isoglutamyl lysine isopeptide (Glu-Lys) (interchain with K-? in acceptor proteins) cross-link involves residue E56.

Belongs to the ubiquitin-like protein UBact family.

Functionally, may function as a protein modifier covalently attached to lysine residues of substrate proteins. This may serve to target the modified proteins for degradation by proteasomes. This Acetithermum autotrophicum protein is Prokaryotic ubiquitin-like protein UBact.